Reading from the N-terminus, the 704-residue chain is Protein cueball (704 aa).

Positions 1–26 are cleaved as a signal peptide; it reads MKSPCRAAAGWLVLLLSSCCLGYVIA. At 27–594 the chain is on the extracellular side; the sequence is TEWAAAVTTD…TYCKESFNRT (568 aa). 4 LDL-receptor class B repeats span residues 69-119, 120-166, 199-242, and 243-288; these read GKLY…DHLE, RRLY…EATT, RHLY…DHYR, and NRLY…KNDY. N152 and N219 each carry an N-linked (GlcNAc...) asparagine glycan. EGF-like domains lie at 363-397, 432-478, and 514-551; these read TQQQGQLTVCLNNGTVNHHTNTCLCQPAFGGKLCE, DRNR…ARCE, and EEYSCNNYCLNGGHCTLGNETTVPECECGEEFAGQRCE. Disulfide bonds link C372–C385, C387–C396, C436–C446, C440–C465, C467–C477, C518–C528, C522–C539, and C541–C550. A glycan (N-linked (GlcNAc...) asparagine) is linked at N375. N450 carries an N-linked (GlcNAc...) asparagine glycan. N532 is a glycosylation site (N-linked (GlcNAc...) asparagine). Residue N592 is glycosylated (N-linked (GlcNAc...) asparagine). The chain crosses the membrane as a helical span at residues 595-615; the sequence is VVYTSLCFTVSFALLLAVVLV. The Cytoplasmic segment spans residues 616-704; it reads VSRMMKPPRP…NCGDGTAERK (89 aa).

It belongs to the cueball family.

The protein resides in the cell membrane. Functionally, has a role in spermatogenesis and oogenesis. The protein is Protein cueball of Anopheles gambiae (African malaria mosquito).